We begin with the raw amino-acid sequence, 60 residues long: Cytotoxin 2 (60 aa).

4 disulfide bridges follow: C3/C21, C14/C38, C42/C53, and C54/C59.

Belongs to the three-finger toxin family. Short-chain subfamily. Type IA cytotoxin sub-subfamily. As to quaternary structure, monomer, or heterodimer with alpha-cobratoxin (AC P01391); disulfide-linked. In terms of tissue distribution, expressed by the venom gland.

Its subcellular location is the secreted. It is found in the target cell membrane. Monomer: shows cytolytic activity. In terms of biological role, heterodimer: has no cytolytic activity, but retains most of the alpha-cobratoxin capacity to compete with alpha-bungarotoxin for binding to Torpedo and alpha-7/CHRNA7 nicotinic acetylcholine receptors (nAChRs) as well as to Lymnea stagnalis acetylcholine-binding protein. The sequence is that of Cytotoxin 2 from Naja kaouthia (Monocled cobra).